Reading from the N-terminus, the 317-residue chain is Protoheme IX farnesyltransferase (317 aa).

9 helical membrane passes run 29–49 (LILL…QGRV), 53–73 (LLLI…TINC), 102–122 (VFLA…FANL), 123–143 (LSAC…THWL), 151–171 (IVIG…AVTG), 179–199 (VLFG…AMLI), 224–241 (IFLY…LVYP), 245–267 (VSWG…AWQL), and 283–303 (FSIL…LLLP).

This sequence belongs to the UbiA prenyltransferase family. Protoheme IX farnesyltransferase subfamily.

The protein localises to the cell inner membrane. The catalysed reaction is heme b + (2E,6E)-farnesyl diphosphate + H2O = Fe(II)-heme o + diphosphate. Its pathway is porphyrin-containing compound metabolism; heme O biosynthesis; heme O from protoheme: step 1/1. Its function is as follows. Converts heme B (protoheme IX) to heme O by substitution of the vinyl group on carbon 2 of heme B porphyrin ring with a hydroxyethyl farnesyl side group. The sequence is that of Protoheme IX farnesyltransferase from Thermosynechococcus vestitus (strain NIES-2133 / IAM M-273 / BP-1).